A 216-amino-acid polypeptide reads, in one-letter code: Probable GTP-binding protein EngB (216 aa).

The EngB-type G domain occupies 30–204 (DGLEVAFAGR…HDVLARWLGL (175 aa)). Residues 38-45 (GRSNAGKS), 64-68 (GRTQL), 82-85 (DLPG), 149-152 (TKAD), and 182-185 (LFSA) contribute to the GTP site. Mg(2+)-binding residues include Ser45 and Thr66.

The protein belongs to the TRAFAC class TrmE-Era-EngA-EngB-Septin-like GTPase superfamily. EngB GTPase family. Requires Mg(2+) as cofactor.

Its function is as follows. Necessary for normal cell division and for the maintenance of normal septation. This chain is Probable GTP-binding protein EngB, found in Azotobacter vinelandii (strain DJ / ATCC BAA-1303).